The primary structure comprises 300 residues: Cation-efflux pump FieF (300 aa).

A run of 4 helical transmembrane segments spans residues 12–32 (AAIA…FAWW), 39–59 (ILAA…NLLV), 82–102 (AALA…LTGI), and 114–134 (PGVG…LVSF). Residues Asp45 and Asp49 each contribute to the Zn(2+) site. The Zn(2+) site is built by His153 and Asp157. Helical transmembrane passes span 156–176 (SDVM…YGWH) and 178–198 (ADAL…LRMG).

It belongs to the cation diffusion facilitator (CDF) transporter (TC 2.A.4) family. FieF subfamily. Homodimer.

It is found in the cell inner membrane. It catalyses the reaction Zn(2+)(in) + H(+)(out) = Zn(2+)(out) + H(+)(in). The enzyme catalyses Cd(2+)(in) + H(+)(out) = Cd(2+)(out) + H(+)(in). The catalysed reaction is Fe(2+)(in) + H(+)(out) = Fe(2+)(out) + H(+)(in). Functionally, divalent metal cation transporter which exports Zn(2+), Cd(2+) and possibly Fe(2+). May be involved in zinc and iron detoxification by efflux. The sequence is that of Cation-efflux pump FieF from Escherichia coli O7:K1 (strain IAI39 / ExPEC).